Reading from the N-terminus, the 947-residue chain is DNA topoisomerase 1 (947 aa).

The Toprim domain maps to 16-140 (RRLVIVESPT…VKRMVFHEIT (125 aa)). Residues E22 and D109 each contribute to the Mg(2+) site. Residues 155–614 (DIDLVDAQET…FYFGGNHGVS (460 aa)) enclose the Topo IA-type catalytic domain. The interval 189-194 (SAGRVQ) is interaction with DNA. The O-(5'-phospho-DNA)-tyrosine intermediate role is filled by Y343. Disordered stretches follow at residues 733–771 (VLPK…GSLL), 846–888 (KRAG…GETN), and 910–947 (ADRR…QSPR). A compositionally biased stretch (basic residues) spans 915–934 (RGPVKRPAKKARKVPAKKAA).

The protein belongs to the type IA topoisomerase family. Monomer. The cofactor is Mg(2+).

The enzyme catalyses ATP-independent breakage of single-stranded DNA, followed by passage and rejoining.. Its function is as follows. Releases the supercoiling and torsional tension of DNA, which is introduced during the DNA replication and transcription, by transiently cleaving and rejoining one strand of the DNA duplex. Introduces a single-strand break via transesterification at a target site in duplex DNA. The scissile phosphodiester is attacked by the catalytic tyrosine of the enzyme, resulting in the formation of a DNA-(5'-phosphotyrosyl)-enzyme intermediate and the expulsion of a 3'-OH DNA strand. The free DNA strand then undergoes passage around the unbroken strand, thus removing DNA supercoils. Finally, in the religation step, the DNA 3'-OH attacks the covalent intermediate to expel the active-site tyrosine and restore the DNA phosphodiester backbone. The sequence is that of DNA topoisomerase 1 from Mycobacterium leprae (strain TN).